Here is a 385-residue protein sequence, read N- to C-terminus: S-adenosylmethionine synthase (385 aa).

His15 is a binding site for ATP. Asp17 provides a ligand contact to Mg(2+). Glu43 contributes to the K(+) binding site. L-methionine contacts are provided by Glu56 and Gln99. A flexible loop region spans residues 99-109 (QSPDINQGVDR). ATP is bound by residues 164–166 (DAK), 230–231 (RF), Asp239, 245–246 (RK), Ala262, and Lys266. Asp239 provides a ligand contact to L-methionine. Lys270 contacts L-methionine.

It belongs to the AdoMet synthase family. In terms of assembly, homotetramer; dimer of dimers. Requires Mg(2+) as cofactor. The cofactor is K(+).

The protein resides in the cytoplasm. The enzyme catalyses L-methionine + ATP + H2O = S-adenosyl-L-methionine + phosphate + diphosphate. Its pathway is amino-acid biosynthesis; S-adenosyl-L-methionine biosynthesis; S-adenosyl-L-methionine from L-methionine: step 1/1. In terms of biological role, catalyzes the formation of S-adenosylmethionine (AdoMet) from methionine and ATP. The overall synthetic reaction is composed of two sequential steps, AdoMet formation and the subsequent tripolyphosphate hydrolysis which occurs prior to release of AdoMet from the enzyme. This Sodalis glossinidius (strain morsitans) protein is S-adenosylmethionine synthase.